The primary structure comprises 244 residues: Probable transcriptional regulatory protein TT_C0469 (244 aa).

This sequence belongs to the TACO1 family.

The protein localises to the cytoplasm. This is Probable transcriptional regulatory protein TT_C0469 from Thermus thermophilus (strain ATCC BAA-163 / DSM 7039 / HB27).